A 239-amino-acid polypeptide reads, in one-letter code: RNA polymerase sigma-E factor (239 aa).

Residues 1 to 29 (MKKLKLRLTHLWYKLLMKLGLKSDEVYYI) constitute a propeptide, removed by SpoIIGA. The short motif at 86–99 (DLISIGTIGLIKAV) is the Polymerase core binding element. The H-T-H motif DNA-binding region spans 206 to 225 (QKDVADMMGISQSYISRLEK).

This sequence belongs to the sigma-70 factor family. Post-translationally, proteolytically cleaved in the N-terminus by SpoIIGA to yield the active peptide.

Functionally, sigma factors are initiation factors that promote the attachment of RNA polymerase to specific initiation sites and are then released. This sigma factor is responsible for the expression of sporulation specific genes. The polypeptide is RNA polymerase sigma-E factor (sigE) (Bacillus subtilis (strain 168)).